We begin with the raw amino-acid sequence, 423 residues long: N-acylneuraminate cytidylyltransferase B (423 aa).

Arg30, Asn40, Arg88, Ser97, Ser99, and Gln120 together coordinate substrate. Arg178 is a catalytic residue.

It belongs to the CMP-NeuNAc synthase family. As to quaternary structure, homotetramer.

The protein resides in the cytoplasm. The enzyme catalyses an N-acylneuraminate + CTP = a CMP-N-acyl-beta-neuraminate + diphosphate. It participates in amino-sugar metabolism; N-acetylneuraminate metabolism. Catalyzes the activation of 2-keto-3-deoxy-D-glycero-D-galacto-nononic acid (KDN) to cytidine 5'-monophosphate 2-keto-3-deoxy-D-glycero-D-galacto-nononic acid (CMP-KDN), a substrate required for the addition of sialic acid. Also has weak activity towards N-acetylneuraminic acid (NeuNAc) and N-glycolylneuraminic acid (Neu5Gc). In Danio rerio (Zebrafish), this protein is N-acylneuraminate cytidylyltransferase B.